Consider the following 409-residue polypeptide: Dihydroorotase (409 aa).

Zn(2+) is bound by residues histidine 57 and histidine 59. Residues histidine 59–arginine 61 and asparagine 91 each bind substrate. Lysine 139, histidine 168, histidine 208, and aspartate 276 together coordinate Zn(2+). Residue lysine 139 is modified to N6-carboxylysine. Aspartate 276 is an active-site residue. Substrate is bound by residues histidine 280 and alanine 290–glycine 291.

This sequence belongs to the metallo-dependent hydrolases superfamily. DHOase family. Class I DHOase subfamily. It depends on Zn(2+) as a cofactor.

The catalysed reaction is (S)-dihydroorotate + H2O = N-carbamoyl-L-aspartate + H(+). It participates in pyrimidine metabolism; UMP biosynthesis via de novo pathway; (S)-dihydroorotate from bicarbonate: step 3/3. Catalyzes the reversible cyclization of carbamoyl aspartate to dihydroorotate. The chain is Dihydroorotase from Thermococcus kodakarensis (strain ATCC BAA-918 / JCM 12380 / KOD1) (Pyrococcus kodakaraensis (strain KOD1)).